Here is an 889-residue protein sequence, read N- to C-terminus: Cytoplasmic aconitate hydratase (889 aa).

Substrate is bound by residues Gln86 and 205 to 207 (DSH). [4Fe-4S] cluster-binding residues include Cys437, Cys503, and Cys506. Substrate contacts are provided by residues Arg536, Arg541, Arg699, and 779 to 780 (SR).

The protein belongs to the aconitase/IPM isomerase family. The cofactor is [4Fe-4S] cluster.

Its subcellular location is the cytoplasm. The protein localises to the cytosol. It catalyses the reaction citrate = D-threo-isocitrate. Bifunctional iron sensor that switches between 2 activities depending on iron availability. Iron deprivation, promotes its mRNA binding activity through which it regulates the expression of genes involved in iron uptake, sequestration and utilization. Binds to iron-responsive elements (IRES) in the untranslated region of target mRNAs preventing for instance the translation of ferritin and aminolevulinic acid synthase and stabilizing the transferrin receptor mRNA. Its function is as follows. Conversely, when cellular iron levels are high, binds a 4Fe-4S cluster which precludes RNA binding activity and promotes the aconitase activity, the isomerization of citrate to isocitrate via cis-aconitate. This chain is Cytoplasmic aconitate hydratase (ACO1), found in Gallus gallus (Chicken).